The chain runs to 201 residues: FMN-dependent NADH:quinone oxidoreductase (201 aa).

FMN-binding positions include Ser9 and 93 to 96; that span reads MYNF.

This sequence belongs to the azoreductase type 1 family. As to quaternary structure, homodimer. FMN is required as a cofactor.

It catalyses the reaction 2 a quinone + NADH + H(+) = 2 a 1,4-benzosemiquinone + NAD(+). It carries out the reaction N,N-dimethyl-1,4-phenylenediamine + anthranilate + 2 NAD(+) = 2-(4-dimethylaminophenyl)diazenylbenzoate + 2 NADH + 2 H(+). Its function is as follows. Quinone reductase that provides resistance to thiol-specific stress caused by electrophilic quinones. Also exhibits azoreductase activity. Catalyzes the reductive cleavage of the azo bond in aromatic azo compounds to the corresponding amines. In Bradyrhizobium sp. (strain BTAi1 / ATCC BAA-1182), this protein is FMN-dependent NADH:quinone oxidoreductase.